The sequence spans 208 residues: A-type ATP synthase subunit E (208 aa).

It belongs to the V-ATPase E subunit family. In terms of assembly, has multiple subunits with at least A(3), B(3), C, D, E, F, H, I and proteolipid K(x).

It is found in the cell membrane. Its function is as follows. Component of the A-type ATP synthase that produces ATP from ADP in the presence of a proton gradient across the membrane. This is A-type ATP synthase subunit E from Ignicoccus hospitalis (strain KIN4/I / DSM 18386 / JCM 14125).